The primary structure comprises 678 residues: Probable E3 ubiquitin ligase complex SCF subunit sconB (678 aa).

The segment at 1-52 (MSTEDNHDSQILTARHRSDASEQSFKSLFGGPSSEDGKETEPDTHDHNHSFS) is disordered. Over residues 35-49 (EDGKETEPDTHDHNH) the composition is skewed to basic and acidic residues. Positions 178 to 224 (IDFITALPPEIAFKILCYLDTTSLCKASQVSRGWRALADDDVVWHRM) constitute an F-box domain. The tract at residues 266–287 (VVGPRSPDASAESPPSGKRKLE) is disordered. 8 WD repeats span residues 347-375 (GHTN…KIWD), 387-415 (GHES…KVWN), 427-455 (GHRG…KIWN), 466-496 (GHTD…RLWD), 508-543 (GHVG…TSGD), 553-595 (MGLE…RLWE), 607-635 (GHLE…KIWD), and 647-675 (GHSG…RMYS).

Belongs to the WD repeat MET30/SCONB/SCON-2 family. In terms of assembly, component of the SCF(sconB) E3 ubiquitin ligase complex.

It functions in the pathway protein modification; protein ubiquitination. Its function is as follows. Component of the SCF(sconB) E3 ubiquitin ligase complex involved in the regulation of sulfur metabolite repression, probably by mediating the inactivation or degradation of the metR transcription factor. The protein is Probable E3 ubiquitin ligase complex SCF subunit sconB (sconB) of Emericella nidulans (strain FGSC A4 / ATCC 38163 / CBS 112.46 / NRRL 194 / M139) (Aspergillus nidulans).